The primary structure comprises 962 residues: Glycine dehydrogenase (decarboxylating) (962 aa).

An N6-(pyridoxal phosphate)lysine modification is found at lysine 710.

It belongs to the GcvP family. In terms of assembly, the glycine cleavage system is composed of four proteins: P, T, L and H. Requires pyridoxal 5'-phosphate as cofactor.

The catalysed reaction is N(6)-[(R)-lipoyl]-L-lysyl-[glycine-cleavage complex H protein] + glycine + H(+) = N(6)-[(R)-S(8)-aminomethyldihydrolipoyl]-L-lysyl-[glycine-cleavage complex H protein] + CO2. The glycine cleavage system catalyzes the degradation of glycine. The P protein binds the alpha-amino group of glycine through its pyridoxal phosphate cofactor; CO(2) is released and the remaining methylamine moiety is then transferred to the lipoamide cofactor of the H protein. This is Glycine dehydrogenase (decarboxylating) from Idiomarina loihiensis (strain ATCC BAA-735 / DSM 15497 / L2-TR).